A 277-amino-acid polypeptide reads, in one-letter code: Large ribosomal subunit protein uL2 (277 aa).

Positions threonine 219 to lysine 277 are disordered. Over residues lysine 258–lysine 277 the composition is skewed to basic residues.

Belongs to the universal ribosomal protein uL2 family. In terms of assembly, part of the 50S ribosomal subunit. Forms a bridge to the 30S subunit in the 70S ribosome.

Functionally, one of the primary rRNA binding proteins. Required for association of the 30S and 50S subunits to form the 70S ribosome, for tRNA binding and peptide bond formation. It has been suggested to have peptidyltransferase activity; this is somewhat controversial. Makes several contacts with the 16S rRNA in the 70S ribosome. The protein is Large ribosomal subunit protein uL2 of Bacillus subtilis (strain 168).